The sequence spans 130 residues: Ribosome-binding factor A (130 aa).

The protein belongs to the RbfA family. As to quaternary structure, monomer. Binds 30S ribosomal subunits, but not 50S ribosomal subunits or 70S ribosomes.

It is found in the cytoplasm. Its function is as follows. One of several proteins that assist in the late maturation steps of the functional core of the 30S ribosomal subunit. Associates with free 30S ribosomal subunits (but not with 30S subunits that are part of 70S ribosomes or polysomes). Required for efficient processing of 16S rRNA. May interact with the 5'-terminal helix region of 16S rRNA. This Prochlorococcus marinus (strain MIT 9215) protein is Ribosome-binding factor A.